A 96-amino-acid chain; its full sequence is MSRRCELTGKGPMTGNNVSHANNKTKRRFLPNLNDVTLQSETLGRGVKLRISAAALRSVDHRGGLDAFLAKAKDEELSAAALKVKKEIAKAQAAEA.

The interval 1–22 (MSRRCELTGKGPMTGNNVSHAN) is disordered.

This sequence belongs to the bacterial ribosomal protein bL28 family.

This Ruegeria sp. (strain TM1040) (Silicibacter sp.) protein is Large ribosomal subunit protein bL28.